The following is a 516-amino-acid chain: tRNA-guanine(15) transglycosylase (516 aa).

Aspartate 93 (nucleophile) is an active-site residue. Aspartate 128 and alanine 196 together coordinate substrate. Zn(2+)-binding residues include cysteine 279, cysteine 281, and cysteine 284. Residues 488-502 (LSAVSERLGDEASVG) are compositionally biased toward low complexity. The interval 488 to 516 (LSAVSERLGDEASVGGDDGDDGGSASSAE) is disordered.

Belongs to the archaeosine tRNA-ribosyltransferase family. It depends on Zn(2+) as a cofactor.

The catalysed reaction is guanosine(15) in tRNA + 7-cyano-7-deazaguanine = 7-cyano-7-carbaguanosine(15) in tRNA + guanine. It participates in tRNA modification; archaeosine-tRNA biosynthesis. Functionally, exchanges the guanine residue with 7-cyano-7-deazaguanine (preQ0) at position 15 in the dihydrouridine loop (D-loop) of archaeal tRNAs. This Haloferax volcanii (strain ATCC 29605 / DSM 3757 / JCM 8879 / NBRC 14742 / NCIMB 2012 / VKM B-1768 / DS2) (Halobacterium volcanii) protein is tRNA-guanine(15) transglycosylase.